We begin with the raw amino-acid sequence, 420 residues long: Sulfate adenylyltransferase (420 aa).

Belongs to the sulfate adenylyltransferase family.

It carries out the reaction sulfate + ATP + H(+) = adenosine 5'-phosphosulfate + diphosphate. It participates in sulfur metabolism; hydrogen sulfide biosynthesis; sulfite from sulfate: step 1/3. The sequence is that of Sulfate adenylyltransferase from Desulforudis audaxviator (strain MP104C).